The following is a 635-amino-acid chain: Phosphatidylserine decarboxylase proenzyme 2 (635 aa).

Residues 20-146 (KLQKFRIHRR…VVQEPESTCK (127 aa)) form the C2 domain. EF-hand domains lie at 174–209 (TERR…FGNL) and 210–245 (VAAN…QQEQ). Ca(2+)-binding residues include aspartate 187, asparagine 189, aspartate 191, glutamine 193, glutamate 198, aspartate 223, asparagine 225, aspartate 227, and glutamate 234. Catalysis depends on charge relay system; for autoendoproteolytic cleavage activity residues aspartate 443, histidine 499, and serine 587. Serine 587 (schiff-base intermediate with substrate; via pyruvic acid; for decarboxylase activity) is an active-site residue. The residue at position 587 (serine 587) is a Pyruvic acid (Ser); by autocatalysis.

The protein belongs to the phosphatidylserine decarboxylase family. PSD-B subfamily. Eukaryotic type II sub-subfamily. As to quaternary structure, heterodimer of a large membrane-associated beta subunit and a small pyruvoyl-containing alpha subunit. It depends on pyruvate as a cofactor. In terms of processing, is synthesized initially as an inactive proenzyme. Formation of the active enzyme involves a self-maturation process in which the active site pyruvoyl group is generated from an internal serine residue via an autocatalytic post-translational modification. Two non-identical subunits are generated from the proenzyme in this reaction, and the pyruvate is formed at the N-terminus of the alpha chain, which is derived from the carboxyl end of the proenzyme. The autoendoproteolytic cleavage occurs by a canonical serine protease mechanism, in which the side chain hydroxyl group of the serine supplies its oxygen atom to form the C-terminus of the beta chain, while the remainder of the serine residue undergoes an oxidative deamination to produce ammonia and the pyruvoyl prosthetic group on the alpha chain. During this reaction, the Ser that is part of the protease active site of the proenzyme becomes the pyruvoyl prosthetic group, which constitutes an essential element of the active site of the mature decarboxylase. Highly expressed in flowers and at lower levels in leaves.

It is found in the vacuole membrane. It carries out the reaction a 1,2-diacyl-sn-glycero-3-phospho-L-serine + H(+) = a 1,2-diacyl-sn-glycero-3-phosphoethanolamine + CO2. Its pathway is phospholipid metabolism; phosphatidylethanolamine biosynthesis; phosphatidylethanolamine from CDP-diacylglycerol: step 2/2. In terms of biological role, catalyzes the formation of phosphatidylethanolamine (PtdEtn) from phosphatidylserine (PtdSer). Plays a central role in phospholipid metabolism and in the interorganelle trafficking of phosphatidylserine. Contributes only to a minor proportion of PtdEtn production. In Arabidopsis thaliana (Mouse-ear cress), this protein is Phosphatidylserine decarboxylase proenzyme 2 (PSD2).